We begin with the raw amino-acid sequence, 135 residues long: Sex-regulated protein janus-A (135 aa).

Lys37 contributes to the substrate binding site. Catalysis depends on His63, which acts as the Proton acceptor. 104-106 (SQG) lines the substrate pocket.

The protein belongs to the janus family. Somatic and germline cells. Isoform B is expressed in both sexes and in somatic and germ line cells. Isoform A is expressed in males and is germ line specific.

Its function is as follows. JanA and janB regulate somatic sex differentiation. This chain is Sex-regulated protein janus-A (janA), found in Drosophila melanogaster (Fruit fly).